A 371-amino-acid chain; its full sequence is Probable tRNA sulfurtransferase (371 aa).

In terms of domain architecture, THUMP spans 54-156 (NANIEALSEV…NEMTYFYHKV (103 aa)). ATP-binding positions include 174-175 (LF), 199-200 (NF), lysine 254, glycine 276, and glutamine 285.

The protein belongs to the ThiI family.

It is found in the cytoplasm. The enzyme catalyses [ThiI sulfur-carrier protein]-S-sulfanyl-L-cysteine + a uridine in tRNA + 2 reduced [2Fe-2S]-[ferredoxin] + ATP + H(+) = [ThiI sulfur-carrier protein]-L-cysteine + a 4-thiouridine in tRNA + 2 oxidized [2Fe-2S]-[ferredoxin] + AMP + diphosphate. It catalyses the reaction [ThiS sulfur-carrier protein]-C-terminal Gly-Gly-AMP + S-sulfanyl-L-cysteinyl-[cysteine desulfurase] + AH2 = [ThiS sulfur-carrier protein]-C-terminal-Gly-aminoethanethioate + L-cysteinyl-[cysteine desulfurase] + A + AMP + 2 H(+). It participates in cofactor biosynthesis; thiamine diphosphate biosynthesis. Catalyzes the ATP-dependent transfer of a sulfur to tRNA to produce 4-thiouridine in position 8 of tRNAs, which functions as a near-UV photosensor. Also catalyzes the transfer of sulfur to the sulfur carrier protein ThiS, forming ThiS-thiocarboxylate. This is a step in the synthesis of thiazole, in the thiamine biosynthesis pathway. The sulfur is donated as persulfide by IscS. This chain is Probable tRNA sulfurtransferase, found in Saccharolobus solfataricus (strain ATCC 35092 / DSM 1617 / JCM 11322 / P2) (Sulfolobus solfataricus).